A 422-amino-acid polypeptide reads, in one-letter code: 4-hydroxy-3-methylbut-2-en-1-yl diphosphate synthase (flavodoxin) (422 aa).

[4Fe-4S] cluster-binding residues include cysteine 316, cysteine 319, cysteine 362, and glutamate 369.

This sequence belongs to the IspG family. It depends on [4Fe-4S] cluster as a cofactor.

It catalyses the reaction (2E)-4-hydroxy-3-methylbut-2-enyl diphosphate + oxidized [flavodoxin] + H2O + 2 H(+) = 2-C-methyl-D-erythritol 2,4-cyclic diphosphate + reduced [flavodoxin]. It functions in the pathway isoprenoid biosynthesis; isopentenyl diphosphate biosynthesis via DXP pathway; isopentenyl diphosphate from 1-deoxy-D-xylulose 5-phosphate: step 5/6. Functionally, converts 2C-methyl-D-erythritol 2,4-cyclodiphosphate (ME-2,4cPP) into 1-hydroxy-2-methyl-2-(E)-butenyl 4-diphosphate. This Anaplasma marginale (strain St. Maries) protein is 4-hydroxy-3-methylbut-2-en-1-yl diphosphate synthase (flavodoxin).